The sequence spans 226 residues: Potassium/proton antiporter CemA (226 aa).

The next 3 membrane-spanning stretches (helical) occupy residues 7-27 (FTSL…SLSF), 111-131 (IICF…LFIL), and 186-206 (IISG…KYWI).

The protein belongs to the CemA family.

The protein localises to the plastid. It is found in the chloroplast inner membrane. It catalyses the reaction K(+)(in) + H(+)(out) = K(+)(out) + H(+)(in). Contributes to K(+)/H(+) antiport activity by supporting proton efflux to control proton extrusion and homeostasis in chloroplasts in a light-dependent manner to modulate photosynthesis. Prevents excessive induction of non-photochemical quenching (NPQ) under continuous-light conditions. Indirectly promotes efficient inorganic carbon uptake into chloroplasts. The sequence is that of Potassium/proton antiporter CemA from Buxus microphylla (Littleleaf boxwood).